The chain runs to 155 residues: SsrA-binding protein (155 aa).

This sequence belongs to the SmpB family.

It is found in the cytoplasm. Functionally, required for rescue of stalled ribosomes mediated by trans-translation. Binds to transfer-messenger RNA (tmRNA), required for stable association of tmRNA with ribosomes. tmRNA and SmpB together mimic tRNA shape, replacing the anticodon stem-loop with SmpB. tmRNA is encoded by the ssrA gene; the 2 termini fold to resemble tRNA(Ala) and it encodes a 'tag peptide', a short internal open reading frame. During trans-translation Ala-aminoacylated tmRNA acts like a tRNA, entering the A-site of stalled ribosomes, displacing the stalled mRNA. The ribosome then switches to translate the ORF on the tmRNA; the nascent peptide is terminated with the 'tag peptide' encoded by the tmRNA and targeted for degradation. The ribosome is freed to recommence translation, which seems to be the essential function of trans-translation. The protein is SsrA-binding protein of Gloeothece citriformis (strain PCC 7424) (Cyanothece sp. (strain PCC 7424)).